We begin with the raw amino-acid sequence, 127 residues long: uncharacterized protein (127 aa).

Transmembrane regions (helical) follow at residues 16–36 (AVIGGIINGILGAICCLCYVI), 59–79 (LVGAISGVIGGVIASILSFLF), and 100–120 (IIGFITAIIFGAILGAVGGVI).

The protein resides in the cell membrane. This is an uncharacterized protein from Methanocaldococcus jannaschii (strain ATCC 43067 / DSM 2661 / JAL-1 / JCM 10045 / NBRC 100440) (Methanococcus jannaschii).